The primary structure comprises 378 residues: Sterol 24-C-methyltransferase erg6 (378 aa).

The protein belongs to the class I-like SAM-binding methyltransferase superfamily. Erg6/SMT family.

The protein localises to the nucleus. The protein resides in the endoplasmic reticulum. The catalysed reaction is zymosterol + S-adenosyl-L-methionine = fecosterol + S-adenosyl-L-homocysteine + H(+). It catalyses the reaction lanosterol + S-adenosyl-L-methionine = eburicol + S-adenosyl-L-homocysteine + H(+). Its pathway is steroid metabolism; ergosterol biosynthesis. Functionally, sterol 24-C-methyltransferase; part of the third module of ergosterol biosynthesis pathway that includes by the late steps of the pathway. Erg6 catalyzes the methyl transfer from S-adenosyl-methionine to the C-24 of zymosterol to form fecosterol. The third module or late pathway involves the ergosterol synthesis itself through consecutive reactions that mainly occur in the endoplasmic reticulum (ER) membrane. Firstly, the squalene synthase erg9 catalyzes the condensation of 2 farnesyl pyrophosphate moieties to form squalene, which is the precursor of all steroids. Secondly, squalene is converted into lanosterol by the consecutive action of the squalene epoxidase erg1 and the lanosterol synthase erg7. The lanosterol 14-alpha-demethylase erg11/cyp1 catalyzes C14-demethylation of lanosterol to produce 4,4'-dimethyl cholesta-8,14,24-triene-3-beta-ol. In the next steps, a complex process involving various demethylation, reduction and desaturation reactions catalyzed by the C-14 reductase erg24 and the C-4 demethylation complex erg25-erg26-erg27 leads to the production of zymosterol. Erg28 likely functions in the C-4 demethylation complex reaction by tethering erg26 and Erg27 to the endoplasmic reticulum or to facilitate interaction between these proteins. Then, the sterol 24-C-methyltransferase erg6 catalyzes the methyl transfer from S-adenosyl-methionine to the C-24 of zymosterol to form fecosterol. The C-8 sterol isomerase erg2 catalyzes the reaction which results in unsaturation at C-7 in the B ring of sterols and thus converts fecosterol to episterol. The sterol-C5-desaturases erg31 and erg32 then catalyze the introduction of a C-5 double bond in the B ring to produce 5-dehydroepisterol. The C-22 sterol desaturase erg5 further converts 5-dehydroepisterol into ergosta-5,7,22,24(28)-tetraen-3beta-ol by forming the C-22(23) double bond in the sterol side chain. Finally, ergosta-5,7,22,24(28)-tetraen-3beta-ol is substrate of the C-24(28) sterol reductase erg4 to produce ergosterol. In the genus Schizosaccharomyces, a second route exists between lanosterol and fecosterol, via the methylation of lanosterol to eburicol by erg6, followed by C14-demethylation by erg11/cyp1 and C4-demethylation by the demethylation complex erg25-erg26-erg27. The chain is Sterol 24-C-methyltransferase erg6 from Schizosaccharomyces pombe (strain 972 / ATCC 24843) (Fission yeast).